Consider the following 426-residue polypeptide: Histidine--tRNA ligase (426 aa).

Belongs to the class-II aminoacyl-tRNA synthetase family. Homodimer.

It is found in the cytoplasm. The catalysed reaction is tRNA(His) + L-histidine + ATP = L-histidyl-tRNA(His) + AMP + diphosphate + H(+). The polypeptide is Histidine--tRNA ligase (Corynebacterium kroppenstedtii (strain DSM 44385 / JCM 11950 / CIP 105744 / CCUG 35717)).